Reading from the N-terminus, the 544-residue chain is Prolyl 4-hydroxylase subunit alpha-3 (544 aa).

Positions 1–19 are cleaved as a signal peptide; sequence MGPGARLAALLAVLALGTG. Residues 107-131 adopt a coiled-coil conformation; the sequence is LEASENIRALKDGYEKVEQDLPAFE. A TPR repeat occupies 227-260; sequence EDALDHLAFAYFRAGNVSCALSLSREFLLYSPDN. A glycan (N-linked (GlcNAc...) asparagine) is linked at asparagine 242. In terms of domain architecture, Fe2OG dioxygenase spans 422-529; the sequence is YAEYLQVVNY…KWVANKWIHE (108 aa). Residues histidine 440 and aspartate 442 each coordinate Fe cation. The N-linked (GlcNAc...) asparagine glycan is linked to asparagine 482. Histidine 510 serves as a coordination point for Fe cation. Lysine 520 provides a ligand contact to 2-oxoglutarate.

The protein belongs to the P4HA family. Heterotetramer of two alpha-3 chains and two beta chains (the beta chain is the multi-functional PDI). Fe(2+) is required as a cofactor. Requires L-ascorbate as cofactor. Post-translationally, N-glycosylation plays no role in the catalytic activity. Highly expressed in placenta, liver and fetal skin. Weakly expressed in fetal epiphyseal cartilage, fetal liver, fibroblast, lung and skeletal muscle. Expressed also in fibrous cap of carotid atherosclerotic lesions.

The protein localises to the endoplasmic reticulum lumen. It carries out the reaction L-prolyl-[collagen] + 2-oxoglutarate + O2 = trans-4-hydroxy-L-prolyl-[collagen] + succinate + CO2. Its function is as follows. Catalyzes the post-translational formation of 4-hydroxyproline in -Xaa-Pro-Gly- sequences in collagens and other proteins. This Homo sapiens (Human) protein is Prolyl 4-hydroxylase subunit alpha-3 (P4HA3).